Reading from the N-terminus, the 507-residue chain is Histidine ammonia-lyase (507 aa).

The 5-imidazolinone (Ala-Gly) cross-link spans 141 to 143 (ASG). 2,3-didehydroalanine (Ser) is present on Ser-142.

The protein belongs to the PAL/histidase family. Contains an active site 4-methylidene-imidazol-5-one (MIO), which is formed autocatalytically by cyclization and dehydration of residues Ala-Ser-Gly.

It is found in the cytoplasm. The catalysed reaction is L-histidine = trans-urocanate + NH4(+). The protein operates within amino-acid degradation; L-histidine degradation into L-glutamate; N-formimidoyl-L-glutamate from L-histidine: step 1/3. The chain is Histidine ammonia-lyase from Burkholderia ambifaria (strain ATCC BAA-244 / DSM 16087 / CCUG 44356 / LMG 19182 / AMMD) (Burkholderia cepacia (strain AMMD)).